The chain runs to 388 residues: MSLSACAELSRCFAAAASAKPNSGKSNSTAATSLVISSPIGHDGAVSSVSRSRKTSRIVAEASQGLTYRDAGVDIDAGAELVRRIAKMAPGIGGFGGLYPLGDSYLVAGTDGVGTKLMLAFETGIHDTIGIDLVAMSVNDIVTSGAKPLFFLDYFATGRLDVDVAEKVVKGIVDGCKQSDCVLLGGETAEMPGLYKEGEYDLSGCAVGIVKKDSVINGKNIVAGDVIIGLPSSGVHSNGFSLVRRVLAQSGLSLKDQLPGSNITLAEALMAPTVIYVKQVLDLISKGGVKGIAHITGGGFTDNIPRVFPEGLGALIYDGSWEVPAVFRWLQEAGKIEDSEMRRTFNMGIGMILVVSPEAANRILENKGQADKFYRIGEIISGNGVTFS.

Belongs to the AIR synthase family.

The protein localises to the plastid. It localises to the chloroplast. The protein resides in the mitochondrion. The catalysed reaction is 2-formamido-N(1)-(5-O-phospho-beta-D-ribosyl)acetamidine + ATP = 5-amino-1-(5-phospho-beta-D-ribosyl)imidazole + ADP + phosphate + H(+). It functions in the pathway purine metabolism; IMP biosynthesis via de novo pathway; 5-amino-1-(5-phospho-D-ribosyl)imidazole from N(2)-formyl-N(1)-(5-phospho-D-ribosyl)glycinamide: step 2/2. The protein is Phosphoribosylformylglycinamidine cyclo-ligase, chloroplastic/mitochondrial (PUR5) of Vigna unguiculata (Cowpea).